The primary structure comprises 61 residues: Photosystem II reaction center protein K (61 aa).

The propeptide occupies 1–24; sequence MLNIFSLMYICLNSALYSSSFLFA. Residues 40 to 60 traverse the membrane as a helical segment; it reads MPVIPVLFFLLAFVWQAAVSF.

The protein belongs to the PsbK family. As to quaternary structure, PSII is composed of 1 copy each of membrane proteins PsbA, PsbB, PsbC, PsbD, PsbE, PsbF, PsbH, PsbI, PsbJ, PsbK, PsbL, PsbM, PsbT, PsbX, PsbY, PsbZ, Psb30/Ycf12, at least 3 peripheral proteins of the oxygen-evolving complex and a large number of cofactors. It forms dimeric complexes.

It is found in the plastid. The protein resides in the chloroplast thylakoid membrane. In terms of biological role, one of the components of the core complex of photosystem II (PSII). PSII is a light-driven water:plastoquinone oxidoreductase that uses light energy to abstract electrons from H(2)O, generating O(2) and a proton gradient subsequently used for ATP formation. It consists of a core antenna complex that captures photons, and an electron transfer chain that converts photonic excitation into a charge separation. In Citrus sinensis (Sweet orange), this protein is Photosystem II reaction center protein K.